A 146-amino-acid chain; its full sequence is Aspartate carbamoyltransferase regulatory chain (146 aa).

Zn(2+) contacts are provided by cysteine 102, cysteine 107, cysteine 131, and cysteine 134.

It belongs to the PyrI family. Contains catalytic and regulatory chains. Zn(2+) serves as cofactor.

In terms of biological role, involved in allosteric regulation of aspartate carbamoyltransferase. The sequence is that of Aspartate carbamoyltransferase regulatory chain from Clostridium botulinum (strain Okra / Type B1).